Here is a 274-residue protein sequence, read N- to C-terminus: Transmembrane O-methyltransferase (274 aa).

The helical transmembrane segment at 14–34 (VGTMSPAIALAFLPLVVTLLV) threads the bilayer. S-adenosyl-L-methionine is bound by residues glutamate 120, 122–123 (GT), serine 128, glutamate 146, and serine 176.

It belongs to the class I-like SAM-binding methyltransferase superfamily. Cation-dependent O-methyltransferase family. In terms of assembly, interacts with LHFPL5, PCDH15, TMC1, TMC2 and TMIE. Interacts directly with TMC1. The interaction of TOMT with TMC1 and TMC2 is required for the transportation of TMC1/2 into the stereocilia of hair cells.

The protein resides in the membrane. The protein localises to the cytoplasm. It is found in the endoplasmic reticulum. The catalysed reaction is a catechol + S-adenosyl-L-methionine = a guaiacol + S-adenosyl-L-homocysteine + H(+). Its function is as follows. Catalyzes the O-methylation, and thereby the inactivation, of catecholamine neurotransmitters and catechol hormones. Required for auditory function. Component of the cochlear hair cell's mechanotransduction (MET) machinery. Involved in the assembly of the asymmetric tip-link MET complex. Required for transportation of TMC1 and TMC2 proteins into the mechanically sensitive stereocilia of the hair cells. The function in MET is independent of the enzymatic activity. The sequence is that of Transmembrane O-methyltransferase from Propithecus coquereli (Coquerel's sifaka).